Here is a 369-residue protein sequence, read N- to C-terminus: Carbamoyl phosphate synthase small chain (369 aa).

The tract at residues 1 to 168 (MYGILVLEDG…KKVVKYPAKD (168 aa)) is CPSase. L-glutamine-binding residues include Ser-45, Gly-220, and Gly-222. Residues 172-364 (SCVVIDCGVK…VALGMKFKQE (193 aa)) form the Glutamine amidotransferase type-1 domain. The active-site Nucleophile is Cys-247. L-glutamine is bound by residues Leu-248, Gln-251, Asn-289, Gly-291, and Phe-292. Active-site residues include His-337 and Glu-339.

Belongs to the CarA family. Composed of two chains; the small (or glutamine) chain promotes the hydrolysis of glutamine to ammonia, which is used by the large (or ammonia) chain to synthesize carbamoyl phosphate. Tetramer of heterodimers (alpha,beta)4.

It carries out the reaction hydrogencarbonate + L-glutamine + 2 ATP + H2O = carbamoyl phosphate + L-glutamate + 2 ADP + phosphate + 2 H(+). The catalysed reaction is L-glutamine + H2O = L-glutamate + NH4(+). It functions in the pathway amino-acid biosynthesis; L-arginine biosynthesis; carbamoyl phosphate from bicarbonate: step 1/1. It participates in pyrimidine metabolism; UMP biosynthesis via de novo pathway; (S)-dihydroorotate from bicarbonate: step 1/3. Functionally, small subunit of the glutamine-dependent carbamoyl phosphate synthetase (CPSase). CPSase catalyzes the formation of carbamoyl phosphate from the ammonia moiety of glutamine, carbonate, and phosphate donated by ATP, constituting the first step of 2 biosynthetic pathways, one leading to arginine and/or urea and the other to pyrimidine nucleotides. The small subunit (glutamine amidotransferase) binds and cleaves glutamine to supply the large subunit with the substrate ammonia. In Methanococcus vannielii (strain ATCC 35089 / DSM 1224 / JCM 13029 / OCM 148 / SB), this protein is Carbamoyl phosphate synthase small chain.